A 107-amino-acid chain; its full sequence is Cytochrome c2 (107 aa).

Position 1 is a pyrrolidone carboxylic acid (Gln1). Heme c is bound by residues Cys13, Cys16, His17, and Met79.

The protein belongs to the cytochrome c family. Binds 1 heme c group covalently per subunit.

The protein resides in the periplasm. Cytochrome c2 is found mainly in purple, non-sulfur, photosynthetic bacteria where it functions as the electron donor to the oxidized bacteriochlorophyll in the photophosphorylation pathway. However, it may also have a role in the respiratory chain and is found in some non-photosynthetic bacteria. In Rhodoplanes tepidamans (Rhodoplanes cryptolactis), this protein is Cytochrome c2.